The sequence spans 1414 residues: MSLEALLNKEEKGSGAAREAFMRRMNERFNSVCHKDAREQQYQDWKYLSYQEFELVNEWSAASRELTVNQCGQLLSNVKSAQAEWLAYEEFVAGRARLVAEVEAKREREQEEQEERQPARAKTKERARARGTAKRAVGRKATKAPAAPAEQEGGVPAARAAAKAPVRAEGAAEPPLKRELSGAKLEDEGEGEDDDEEEDEDDEDDEDEDEDEDEEEEEEEELEELEDIQLLDDDNDKDFSPEGGRSKSSIKLNTKLDINSDIALIQRELLKMAQKHKSAKAKKRKFTSCVVQRYDSDHTRLEVKVTLKQLHIKRLKRLLNEAKRKRAAEEALAANEQQGNLAKRRKTAQKQKPAANGAPAASSSEDVTVTEAATPVPAKVNGEAPSNESPVAAIPDINPTTGLPTYGMKMTAKEARAIQRHYDTTYITVWKDMARKDSAKLSRLVQQIQSIRSANFKKTSSLVAREARKWQSRNFRQVKDFQTRARRGVREMSSFWKKNEREERELKKRAEREAIEQAKKEEEERESKRQARKLNFLLTQTELYSHFIGSKIKTNELEGNMADSNLATAPDVSAIDLSKPPTRKNEVHTIDFDNEDDEELHRKAAQNASNALKETREKAKAFDGMSGDDEELNFQNPTSLGEITIEQPKILACTLKEYQLKGLNWLANLYDQGINGILADEMGLGKTVQSISVLAHLAERYNIWGPFIVVTPASTLHNWVNEIQKFVPDFKILPYWGNGNDRKILRRFWDRKHLRYSKDAPFHVMITSYQMIVSDAAYLQKMKWQYMILDEAQAIKSSQSSRWKNLLSFHCRNRLLLTGTPIQNSMQELWALLHFIMPSLFDSHDEFNDWFSKDIESHAQSNTQLNQQQLRRLHMILKPFMLRRIKKNVQSELGDKIEIDVMCDLTHRQAKLYQVLKSQVSASYDAIENAASNSSGDDSGNMSLSDSKIMNTVMEFRKVCNHPDLFERADVSSPFSFTSFGQTGSIMREGDVIDVQYSSKNPVSFHLPRLIYDDLILPNYNHDSDMRTKILNHMMSIFAPANSPDLCATLSKVAGVEPNSILRLSQEHIVKRAIDLSAHSPNVTRSGIFSVVYEDDKSSLSSLDKTLLINDKSDYLHTIARTTQNGVLASLLNIQGNFYENEYMNVLRPAYRPAAAAPPISIHVMGSSNFSIKRDNALFEPYITRSLGIIPPELQTRLTEKENNIFTALPISELYPAPLNKSFSSYISMPSMDRFITESAKLKKLDELLVRLKAGEHRVLIYFQMTRMMDLIEEYLTYRQYKHIRLDGSSKLEDRRDLVHDWQTKSDIFIFLLSTRAGGLGINLTSADTVIFYDSDWNPTIDSQAMDRAHRLGQTKQVTVYRLLIKGTIEERMRDRAKQKEHVQQVVMEGKTKENNVQTITANGKTLENLPLPL.

Basic and acidic residues predominate over residues 106–128 (REREQEEQEERQPARAKTKERAR). Disordered regions lie at residues 106–252 (RERE…SIKL) and 330–396 (EALA…AIPD). The span at 129–142 (ARGTAKRAVGRKAT) shows a compositional bias: basic residues. Positions 154-173 (GVPAARAAAKAPVRAEGAAE) are enriched in low complexity. A compositionally biased stretch (basic and acidic residues) spans 175–186 (PLKRELSGAKLE). The segment covering 187-236 (DEGEGEDDDEEEDEDDEDDEDEDEDEDEEEEEEEELEELEDIQLLDDDND) has biased composition (acidic residues). The stretch at 265–341 (IQRELLKMAQ…LAANEQQGNL (77 aa)) forms a coiled coil. The span at 350–361 (KQKPAANGAPAA) shows a compositional bias: low complexity. Positions 429–554 (VWKDMARKDS…SHFIGSKIKT (126 aa)) constitute a DBINO domain. The Helicase ATP-binding domain occupies 667-839 (ANLYDQGING…WALLHFIMPS (173 aa)). 681 to 687 (EMGLGKT) contacts ATP. The DEAQ box motif lies at 790 to 793 (DEAQ). Positions 1244–1398 (KLDELLVRLK…EGKTKENNVQ (155 aa)) constitute a Helicase C-terminal domain.

This sequence belongs to the SNF2/RAD54 helicase family. Component of the INO80 chromatin-remodeling complex.

It is found in the nucleus. The enzyme catalyses ATP + H2O = ADP + phosphate + H(+). In terms of biological role, ATPase component of the INO80 complex which remodels chromatin by shifting nucleosomes and is involved in DNA repair. This Eremothecium gossypii (strain ATCC 10895 / CBS 109.51 / FGSC 9923 / NRRL Y-1056) (Yeast) protein is Chromatin-remodeling ATPase INO80 (INO80).